The following is a 407-amino-acid chain: Nicotinate phosphoribosyltransferase (407 aa).

H228 is subject to Phosphohistidine; by autocatalysis.

The protein belongs to the NAPRTase family. In terms of processing, transiently phosphorylated on a His residue during the reaction cycle. Phosphorylation strongly increases the affinity for substrates and increases the rate of nicotinate D-ribonucleotide production. Dephosphorylation regenerates the low-affinity form of the enzyme, leading to product release.

It carries out the reaction nicotinate + 5-phospho-alpha-D-ribose 1-diphosphate + ATP + H2O = nicotinate beta-D-ribonucleotide + ADP + phosphate + diphosphate. It functions in the pathway cofactor biosynthesis; NAD(+) biosynthesis; nicotinate D-ribonucleotide from nicotinate: step 1/1. Its activity is regulated as follows. 100-fold more active in the presence of saturating ATP. In terms of biological role, catalyzes the synthesis of beta-nicotinate D-ribonucleotide from nicotinate and 5-phospho-D-ribose 1-phosphate at the expense of ATP. Functions in the deamidating salvage pathway for production of NAD from nicotinamide. Displays a strict preference for nicotinate over nicotinamide substrate. The polypeptide is Nicotinate phosphoribosyltransferase (Acinetobacter baylyi (strain ATCC 33305 / BD413 / ADP1)).